Consider the following 894-residue polypeptide: LRR receptor-like serine/threonine-protein kinase IOS1 (894 aa).

A signal peptide spans 1–23 (MAFSSCFLLVLLQIFSALLLCLA). The Extracellular segment spans residues 24 to 515 (QDQSGFISLD…KKKKNTVIAP (492 aa)). N48, N95, N137, N179, N223, N230, N260, N287, N309, N338, N399, N441, N462, and N469 each carry an N-linked (GlcNAc...) asparagine glycan. 2 LRR repeats span residues 431 to 457 (LTSLEVLDLSNNSLTGSVPEFLANMET) and 459 to 479 (KLINLSGNELNGSIPATLLDK). A helical membrane pass occupies residues 516–536 (VAASLVSVFLIGAGIVTFLIL). The Cytoplasmic portion of the chain corresponds to 537–894 (KRKKRTKLGL…FTTELNPGAR (358 aa)). T577 bears the Phosphothreonine mark. The 273-residue stretch at 586 to 858 (NNFERVLGRG…QVVMDLKECL (273 aa)) folds into the Protein kinase domain. ATP-binding positions include 592-600 (LGRGGFGVV) and K613. Y658 is modified (phosphotyrosine). The Proton acceptor role is filled by D710. S744 carries the phosphoserine modification. 2 positions are modified to phosphothreonine: T745 and T750. Y758 carries the phosphotyrosine modification.

It belongs to the protein kinase superfamily. Ser/Thr protein kinase family. As to quaternary structure, homodimerization. Interacts with BAK1 and FLS2; triggers FLS2-BAK1 complex formation upon microbe-associated molecular patterns (MAMPs) treatment. Also binds to CERK1 and EFR. As to expression, expressed in roots, cotyledons, leaves, flowers and siliques.

It localises to the cell membrane. In terms of biological role, negatively regulates the abscisic acid (ABA) signaling pathway. Required for full susceptibility to filamentous (hemi)biotrophic oomycetes (e.g. H.arabidopsidis and P.parasitica) and fungal (e.g. E.cruciferarum) pathogens, probably by triggering the repression of ABA-sensitive COLD REGULATED and RESISTANCE TO DESICCATION genes during infection, but independently of immune responses. Involved in BAK1-dependent and BAK1-independent microbe-associated molecular patterns (MAMPs)-triggered immunity (PTI) leading to defense responses, including callose deposition and MAPK cascade activation, toward pathogenic bacteria (e.g. P.syringae). Required for chitin-mediated PTI. The sequence is that of LRR receptor-like serine/threonine-protein kinase IOS1 from Arabidopsis thaliana (Mouse-ear cress).